The following is a 338-amino-acid chain: Phenylalanine--tRNA ligase alpha subunit (338 aa).

Mg(2+) is bound at residue glutamate 252.

It belongs to the class-II aminoacyl-tRNA synthetase family. Phe-tRNA synthetase alpha subunit type 1 subfamily. In terms of assembly, tetramer of two alpha and two beta subunits. The cofactor is Mg(2+).

It localises to the cytoplasm. It catalyses the reaction tRNA(Phe) + L-phenylalanine + ATP = L-phenylalanyl-tRNA(Phe) + AMP + diphosphate + H(+). The sequence is that of Phenylalanine--tRNA ligase alpha subunit from Ectopseudomonas mendocina (strain ymp) (Pseudomonas mendocina).